Here is a 305-residue protein sequence, read N- to C-terminus: Tyrosine recombinase XerD (305 aa).

The region spanning 2–87 is the Core-binding (CB) domain; it reads SQGEAWADAF…AVRQFYRFVL (86 aa). Residues 108–295 form the Tyr recombinase domain; it reads PLPKVLERDE…AGEHLAHIVQ (188 aa). Active-site residues include Arg-149, Lys-173, His-247, Arg-250, and His-273. The O-(3'-phospho-DNA)-tyrosine intermediate role is filled by Tyr-282.

The protein belongs to the 'phage' integrase family. XerD subfamily. As to quaternary structure, forms a cyclic heterotetrameric complex composed of two molecules of XerC and two molecules of XerD.

Its subcellular location is the cytoplasm. In terms of biological role, site-specific tyrosine recombinase, which acts by catalyzing the cutting and rejoining of the recombining DNA molecules. The XerC-XerD complex is essential to convert dimers of the bacterial chromosome into monomers to permit their segregation at cell division. It also contributes to the segregational stability of plasmids. This chain is Tyrosine recombinase XerD, found in Caulobacter vibrioides (strain ATCC 19089 / CIP 103742 / CB 15) (Caulobacter crescentus).